A 465-amino-acid chain; its full sequence is ATP synthase subunit beta (465 aa).

152 to 159 contributes to the ATP binding site; it reads GGAGVGKT.

Belongs to the ATPase alpha/beta chains family. F-type ATPases have 2 components, CF(1) - the catalytic core - and CF(0) - the membrane proton channel. CF(1) has five subunits: alpha(3), beta(3), gamma(1), delta(1), epsilon(1). CF(0) has three main subunits: a(1), b(2) and c(9-12). The alpha and beta chains form an alternating ring which encloses part of the gamma chain. CF(1) is attached to CF(0) by a central stalk formed by the gamma and epsilon chains, while a peripheral stalk is formed by the delta and b chains.

The protein localises to the cell inner membrane. The catalysed reaction is ATP + H2O + 4 H(+)(in) = ADP + phosphate + 5 H(+)(out). Produces ATP from ADP in the presence of a proton gradient across the membrane. The catalytic sites are hosted primarily by the beta subunits. In Campylobacter concisus (strain 13826), this protein is ATP synthase subunit beta.